We begin with the raw amino-acid sequence, 818 residues long: Structure-specific endonuclease subunit SLX4 (818 aa).

Disordered regions lie at residues M1–S39, R53–N151, F279–S324, N413–K437, and M587–E712. Residues V28 to S39 are compositionally biased toward low complexity. Positions P90–F103 are enriched in basic and acidic residues. Residues T306–T316 show a composition bias toward low complexity. The span at T426–K437 shows a compositional bias: polar residues. Basic and acidic residues predominate over residues Q604–A618. 3 stretches are compositionally biased toward polar residues: residues S621–G640, S652–V672, and S696–E712.

Belongs to the SLX4 family. Forms a heterodimer with SLX1. Phosphorylated in response to DNA damage.

The protein localises to the nucleus. In terms of biological role, regulatory subunit of the SLX1-SLX4 structure-specific endonuclease that resolves DNA secondary structures generated during DNA repair and recombination. Has endonuclease activity towards branched DNA substrates, introducing single-strand cuts in duplex DNA close to junctions with ss-DNA. This is Structure-specific endonuclease subunit SLX4 from Uncinocarpus reesii (strain UAMH 1704).